A 700-amino-acid chain; its full sequence is Suprabasin (700 aa).

The first 23 residues, 1-23 (MYLVSLLSSCCLLVLLGTLPARA), serve as a signal peptide directing secretion. Disordered regions lie at residues 133 to 158 (QGGS…VANK), 183 to 258 (HAFG…VADK), and 283 to 391 (HAFG…GAHH). Positions 488-546 (KEAEKVAHGVQNGVNQAQKEAEKVAHGVQNGVNQAQKEAEKVAHGVQNGVNQAQKEAEK) form a coiled coil. Residues 641–654 (GVNQPSKEANQLLN) show a composition bias toward polar residues. Residues 641 to 669 (GVNQPSKEANQLLNGSHQGQGGYGGQHGG) form a disordered region. The span at 658 to 668 (QGQGGYGGQHG) shows a compositional bias: gly residues.

As to expression, detected in epidermis, in suprabasal keratinocytes. Detected in suprabasal layers of embryonic epidermis and in stratified layers of embryonic tongue and palate. Detected in adult stomach.

It is found in the secreted. The sequence is that of Suprabasin (Sbsn) from Mus musculus (Mouse).